We begin with the raw amino-acid sequence, 230 residues long: Sugar fermentation stimulation protein homolog (230 aa).

This sequence belongs to the SfsA family.

This is Sugar fermentation stimulation protein homolog from Clostridium botulinum (strain 657 / Type Ba4).